The chain runs to 354 residues: Uroporphyrinogen decarboxylase (354 aa).

Residues 27-31 (RQAGR), Asp77, Tyr154, Thr209, and His327 each bind substrate.

It belongs to the uroporphyrinogen decarboxylase family. In terms of assembly, homodimer.

It localises to the cytoplasm. The enzyme catalyses uroporphyrinogen III + 4 H(+) = coproporphyrinogen III + 4 CO2. It functions in the pathway porphyrin-containing compound metabolism; protoporphyrin-IX biosynthesis; coproporphyrinogen-III from 5-aminolevulinate: step 4/4. In terms of biological role, catalyzes the decarboxylation of four acetate groups of uroporphyrinogen-III to yield coproporphyrinogen-III. The chain is Uroporphyrinogen decarboxylase from Psychromonas ingrahamii (strain DSM 17664 / CCUG 51855 / 37).